The sequence spans 790 residues: PAN2-PAN3 deadenylation complex subunit PAN3 (790 aa).

2 disordered regions span residues 166–191 (IAQQ…AVSA) and 235–259 (AMIS…ASPI). A compositionally biased stretch (low complexity) spans 168 to 191 (QQQPQHPQKQQQHPPSVGGGAVSA). A pseudokinase domain region spans residues 369–655 (DAAEAAQHAL…SVTDLMPMIG (287 aa)). Residues Arg423, 472–479 (DYHPGSQT), and 552–553 (TK) contribute to the ATP site. Residues 656–694 (ARFYTQLDALQSKIDMQEDELAKEMENGRLYRILVKLNS) adopt a coiled-coil conformation. The segment at 695–790 (INERPDFNLD…FSELMSSAAN (96 aa)) is knob domain.

This sequence belongs to the protein kinase superfamily. PAN3 family. Homodimer. Forms a heterotrimer with a catalytic subunit PAN2 to form the poly(A)-nuclease (PAN) deadenylation complex. Interacts (via PAM-2 motif) with poly(A)-binding protein (via PABC domain), conferring substrate specificity of the enzyme complex. Interacts with the GW182 family protein gw. Interacts with Gyf.

The protein localises to the cytoplasm. It is found in the P-body. Regulatory subunit of the poly(A)-nuclease (PAN) deadenylation complex, one of two cytoplasmic mRNA deadenylases involved in general and miRNA-mediated mRNA turnover. PAN specifically shortens poly(A) tails of RNA and the activity is stimulated by poly(A)-binding protein (PABP). PAN deadenylation is followed by rapid degradation of the shortened mRNA tails by the CCR4-NOT complex. Deadenylated mRNAs are then degraded by two alternative mechanisms, namely exosome-mediated 3'-5' exonucleolytic degradation, or deadenylation-dependent mRNA decaping and subsequent 5'-3' exonucleolytic degradation by XRN1. PAN3 acts as a positive regulator for PAN activity, recruiting the catalytic subunit PAN2 to mRNA via its interaction with RNA and PABP, and to miRNA targets via its interaction with GW182 family proteins. The sequence is that of PAN2-PAN3 deadenylation complex subunit PAN3 from Drosophila melanogaster (Fruit fly).